The sequence spans 137 residues: Large ribosomal subunit protein uL16 (137 aa).

Belongs to the universal ribosomal protein uL16 family. As to quaternary structure, part of the 50S ribosomal subunit.

Binds 23S rRNA and is also seen to make contacts with the A and possibly P site tRNAs. The chain is Large ribosomal subunit protein uL16 from Methylorubrum extorquens (strain CM4 / NCIMB 13688) (Methylobacterium extorquens).